We begin with the raw amino-acid sequence, 555 residues long: Glutamate--tRNA ligase (555 aa).

Positions 100-110 match the 'HIGH' region motif; sequence PNPSGPLHIGH.

The protein belongs to the class-I aminoacyl-tRNA synthetase family. Glutamate--tRNA ligase type 2 subfamily.

The protein localises to the cytoplasm. It carries out the reaction tRNA(Glu) + L-glutamate + ATP = L-glutamyl-tRNA(Glu) + AMP + diphosphate. Catalyzes the attachment of glutamate to tRNA(Glu) in a two-step reaction: glutamate is first activated by ATP to form Glu-AMP and then transferred to the acceptor end of tRNA(Glu). The polypeptide is Glutamate--tRNA ligase (Methanococcus maripaludis (strain DSM 14266 / JCM 13030 / NBRC 101832 / S2 / LL)).